The following is a 266-amino-acid chain: UPF0294 protein YafD (266 aa).

The protein belongs to the UPF0294 family.

The protein resides in the cytoplasm. The protein is UPF0294 protein YafD of Salmonella typhi.